We begin with the raw amino-acid sequence, 205 residues long: Thymidylate kinase (205 aa).

11-18 (GVEGAGKS) contributes to the ATP binding site.

The protein belongs to the thymidylate kinase family.

The catalysed reaction is dTMP + ATP = dTDP + ADP. Functionally, phosphorylation of dTMP to form dTDP in both de novo and salvage pathways of dTTP synthesis. The protein is Thymidylate kinase of Vesicomyosocius okutanii subsp. Calyptogena okutanii (strain HA).